The chain runs to 414 residues: Putative transporter YoaB (414 aa).

Residues 1–11 are Cytoplasmic-facing; that stretch reads MLDKIGIPKRL. The chain crosses the membrane as a helical span at residues 12 to 32; that stretch reads AWGFLGVVLFMMGDGLEQGWL. Residues 33 to 47 lie on the Extracellular side of the membrane; sequence SPFLIENGLTVQQSA. The chain crosses the membrane as a helical span at residues 48–68; that stretch reads SIFSIYGIALAIASWFSGVCL. Residues 69–75 are Cytoplasmic-facing; that stretch reads EAFGAKR. Residues 76-96 form a helical membrane-spanning segment; sequence TMFMGLLFYVIGTAAFIVFGF. Residues 97–107 lie on the Extracellular side of the membrane; that stretch reads EQLNLPVMYVT. Residues 108–128 traverse the membrane as a helical segment; the sequence is YFVKGLGYPLFAYSFLTWVIY. Topologically, residues 129–136 are cytoplasmic; sequence RTPQSKLS. The chain crosses the membrane as a helical span at residues 137–157; that stretch reads TAVGWFWIAYCLGMFVFGAWY. At 158 to 167 the chain is on the extracellular side; that stretch reads SSYAIKAFGY. The helical transmembrane segment at 168–188 threads the bilayer; that stretch reads LNTLWSSIFWVCLGAFFALFI. The Cytoplasmic portion of the chain corresponds to 189–219; it reads NKDRFEKKKRKRSETAEELLKGVTILFTNPR. Residues 220–240 form a helical membrane-spanning segment; that stretch reads VLTGGIIRIINSIGTYGFPVF. Over 241 to 255 the chain is Extracellular; sequence LPMHMAQHGISTNVW. The chain crosses the membrane as a helical span at residues 256–276; that stretch reads LQIWGTIFLGNIVFNLIFGIV. At 277 to 286 the chain is on the cytoplasmic side; sequence GDKFGWKNTV. Residues 287–307 traverse the membrane as a helical segment; sequence IWFGGVGCGIFTVLLYYAPVF. Residues 308–316 are Extracellular-facing; sequence SGGSLAVVS. A helical transmembrane segment spans residues 317–337; the sequence is VIGFIWGGLLAGYVPIGAIVP. Residues 338 to 343 are Cytoplasmic-facing; sequence TVAGKD. A helical membrane pass occupies residues 344-364; the sequence is KGAAMSVLNLAAGLSAFVGPA. Topologically, residues 365 to 375 are extracellular; that stretch reads LAWLFIGLVGA. Residues 376 to 398 form a helical membrane-spanning segment; sequence QGVVWIFAALYLASAVLTKCIHI. Over 399–414 the chain is Cytoplasmic; the sequence is PEEKAVKEETSPQYAS.

It belongs to the major facilitator superfamily. Sugar transporter (TC 2.A.1.1) family. CsbX subfamily.

It localises to the cell membrane. This is Putative transporter YoaB (yoaB) from Bacillus subtilis (strain 168).